We begin with the raw amino-acid sequence, 408 residues long: Peptidase T-like protein RB0614 (408 aa).

Histidine 80 is a Zn(2+) binding site. Aspartate 82 is a catalytic residue. Residue aspartate 142 coordinates Zn(2+). Residue glutamate 174 is the Proton acceptor of the active site. Zn(2+) is bound by residues glutamate 175, aspartate 198, and histidine 380.

This sequence belongs to the peptidase M20B family. The cofactor is Zn(2+).

The chain is Peptidase T-like protein RB0614 from Rhizobium meliloti (strain 1021) (Ensifer meliloti).